Consider the following 140-residue polypeptide: Ribosome-binding factor A (140 aa).

Residues 1–13 (MQKKSSSKSHRAT) show a composition bias toward basic residues. Residues 1-22 (MQKKSSSKSHRATRGPSQRQLR) form a disordered region.

Belongs to the RbfA family. As to quaternary structure, monomer. Binds 30S ribosomal subunits, but not 50S ribosomal subunits or 70S ribosomes.

The protein resides in the cytoplasm. One of several proteins that assist in the late maturation steps of the functional core of the 30S ribosomal subunit. Associates with free 30S ribosomal subunits (but not with 30S subunits that are part of 70S ribosomes or polysomes). Required for efficient processing of 16S rRNA. May interact with the 5'-terminal helix region of 16S rRNA. The polypeptide is Ribosome-binding factor A (Parvibaculum lavamentivorans (strain DS-1 / DSM 13023 / NCIMB 13966)).